Here is a 213-residue protein sequence, read N- to C-terminus: Imidazole glycerol phosphate synthase subunit HisH (213 aa).

Positions 1 to 212 (MLAILDYKAG…HRYCTEAADA (212 aa)) constitute a Glutamine amidotransferase type-1 domain. Cysteine 79 (nucleophile) is an active-site residue. Catalysis depends on residues histidine 187 and glutamate 189.

Heterodimer of HisH and HisF.

Its subcellular location is the cytoplasm. It catalyses the reaction 5-[(5-phospho-1-deoxy-D-ribulos-1-ylimino)methylamino]-1-(5-phospho-beta-D-ribosyl)imidazole-4-carboxamide + L-glutamine = D-erythro-1-(imidazol-4-yl)glycerol 3-phosphate + 5-amino-1-(5-phospho-beta-D-ribosyl)imidazole-4-carboxamide + L-glutamate + H(+). The enzyme catalyses L-glutamine + H2O = L-glutamate + NH4(+). The protein operates within amino-acid biosynthesis; L-histidine biosynthesis; L-histidine from 5-phospho-alpha-D-ribose 1-diphosphate: step 5/9. Functionally, IGPS catalyzes the conversion of PRFAR and glutamine to IGP, AICAR and glutamate. The HisH subunit catalyzes the hydrolysis of glutamine to glutamate and ammonia as part of the synthesis of IGP and AICAR. The resulting ammonia molecule is channeled to the active site of HisF. The polypeptide is Imidazole glycerol phosphate synthase subunit HisH (Nitratidesulfovibrio vulgaris (strain DP4) (Desulfovibrio vulgaris)).